Consider the following 121-residue polypeptide: Small ribosomal subunit protein uS13 (121 aa).

Positions 90-121 are disordered; that stretch reads RHRRGLPTRGQNTKNNARTRKGPTKTVAGKKK. Basic residues predominate over residues 106-121; the sequence is ARTRKGPTKTVAGKKK.

The protein belongs to the universal ribosomal protein uS13 family. In terms of assembly, part of the 30S ribosomal subunit. Forms a loose heterodimer with protein S19. Forms two bridges to the 50S subunit in the 70S ribosome.

Located at the top of the head of the 30S subunit, it contacts several helices of the 16S rRNA. In the 70S ribosome it contacts the 23S rRNA (bridge B1a) and protein L5 of the 50S subunit (bridge B1b), connecting the 2 subunits; these bridges are implicated in subunit movement. Contacts the tRNAs in the A and P-sites. The sequence is that of Small ribosomal subunit protein uS13 from Enterococcus faecalis (strain ATCC 700802 / V583).